Here is a 270-residue protein sequence, read N- to C-terminus: uncharacterized protein (270 aa).

Positions 1-22 (MEYIKKIALYMSVLLLIIFIGG) are cleaved as a signal peptide. A lipid anchor (N-palmitoyl cysteine) is attached at Cys23. Cys23 carries S-diacylglycerol cysteine lipidation.

The protein belongs to the staphylococcal tandem lipoprotein family.

It localises to the cell membrane. This is an uncharacterized protein from Staphylococcus aureus (strain N315).